Consider the following 668-residue polypeptide: Fructose-1,6-bisphosphatase class 3 (668 aa).

Belongs to the FBPase class 3 family. Requires Mn(2+) as cofactor.

The catalysed reaction is beta-D-fructose 1,6-bisphosphate + H2O = beta-D-fructose 6-phosphate + phosphate. Its pathway is carbohydrate biosynthesis; gluconeogenesis. The protein is Fructose-1,6-bisphosphatase class 3 of Clostridium botulinum (strain Okra / Type B1).